The sequence spans 102 residues: MYAIVKAGGHQEKVEVGDVILVNRLDAKKGDTVEFPVSLVVDGDKVTLAAADLAKVSVKAEVVNDEAKGPKIDIQKYKNKTGVARRKGHRQKLTIVKITAIA.

This sequence belongs to the bacterial ribosomal protein bL21 family. In terms of assembly, part of the 50S ribosomal subunit. Contacts protein L20.

Its function is as follows. This protein binds to 23S rRNA in the presence of protein L20. The protein is Large ribosomal subunit protein bL21 of Bifidobacterium longum subsp. infantis (strain ATCC 15697 / DSM 20088 / JCM 1222 / NCTC 11817 / S12).